A 287-amino-acid chain; its full sequence is Putative ABC transporter ATP-binding protein MM_1038 (287 aa).

The 234-residue stretch at Leu-5–Ser-238 folds into the ABC transporter domain. Gly-40–Ser-47 is an ATP binding site.

This sequence belongs to the ABC transporter superfamily.

It is found in the cell membrane. Its function is as follows. Probably part of an ABC transporter complex. Responsible for energy coupling to the transport system. The sequence is that of Putative ABC transporter ATP-binding protein MM_1038 from Methanosarcina mazei (strain ATCC BAA-159 / DSM 3647 / Goe1 / Go1 / JCM 11833 / OCM 88) (Methanosarcina frisia).